The primary structure comprises 190 residues: Probable nicotinate-nucleotide adenylyltransferase (190 aa).

This sequence belongs to the NadD family.

It carries out the reaction nicotinate beta-D-ribonucleotide + ATP + H(+) = deamido-NAD(+) + diphosphate. It participates in cofactor biosynthesis; NAD(+) biosynthesis; deamido-NAD(+) from nicotinate D-ribonucleotide: step 1/1. Functionally, catalyzes the reversible adenylation of nicotinate mononucleotide (NaMN) to nicotinic acid adenine dinucleotide (NaAD). This chain is Probable nicotinate-nucleotide adenylyltransferase, found in Frankia casuarinae (strain DSM 45818 / CECT 9043 / HFP020203 / CcI3).